We begin with the raw amino-acid sequence, 302 residues long: Oxaloacetate decarboxylase 2 (302 aa).

Residue serine 50 participates in substrate binding. Aspartate 88 contacts Mg(2+). Substrate is bound by residues arginine 159 and histidine 235.

Belongs to the isocitrate lyase/PEP mutase superfamily. Oxaloacetate decarboxylase family. In terms of assembly, homotetramer; dimer of dimers. Mg(2+) serves as cofactor.

The enzyme catalyses oxaloacetate + H(+) = pyruvate + CO2. In terms of biological role, catalyzes the decarboxylation of oxaloacetate into pyruvate. Seems to play a role in maintaining cellular concentrations of bicarbonate and pyruvate. The polypeptide is Oxaloacetate decarboxylase 2 (Pseudomonas putida (strain W619)).